The primary structure comprises 249 residues: ATP synthase subunit a, chloroplastic (249 aa).

The next 5 helical transmembrane spans lie at 40 to 60 (QVLI…IVAV), 97 to 117 (VPFI…GALL), 136 to 156 (INTT…AGLS), 201 to 221 (LVVV…VMFL), and 222 to 242 (GLFT…AYIG).

The protein belongs to the ATPase A chain family. In terms of assembly, F-type ATPases have 2 components, CF(1) - the catalytic core - and CF(0) - the membrane proton channel. CF(1) has five subunits: alpha(3), beta(3), gamma(1), delta(1), epsilon(1). CF(0) has four main subunits: a, b, b' and c.

It localises to the plastid. The protein localises to the chloroplast thylakoid membrane. In terms of biological role, key component of the proton channel; it plays a direct role in the translocation of protons across the membrane. The sequence is that of ATP synthase subunit a, chloroplastic from Manihot esculenta (Cassava).